The primary structure comprises 153 residues: Sec-independent protein translocase protein TatB (153 aa).

Residues 1–21 traverse the membrane as a helical segment; the sequence is MFGISFSELLLVGLVALLVLG. The disordered stretch occupies residues 78–153; the sequence is MFAQNQHPET…HDSSLPPRAP (76 aa).

This sequence belongs to the TatB family. As to quaternary structure, the Tat system comprises two distinct complexes: a TatABC complex, containing multiple copies of TatA, TatB and TatC subunits, and a separate TatA complex, containing only TatA subunits. Substrates initially bind to the TatABC complex, which probably triggers association of the separate TatA complex to form the active translocon.

It is found in the cell inner membrane. In terms of biological role, part of the twin-arginine translocation (Tat) system that transports large folded proteins containing a characteristic twin-arginine motif in their signal peptide across membranes. Together with TatC, TatB is part of a receptor directly interacting with Tat signal peptides. TatB may form an oligomeric binding site that transiently accommodates folded Tat precursor proteins before their translocation. The polypeptide is Sec-independent protein translocase protein TatB (Pseudomonas savastanoi pv. phaseolicola (strain 1448A / Race 6) (Pseudomonas syringae pv. phaseolicola (strain 1448A / Race 6))).